Here is a 381-residue protein sequence, read N- to C-terminus: Glycerate 2-kinase (381 aa).

The protein belongs to the glycerate kinase type-1 family.

It carries out the reaction (R)-glycerate + ATP = (2R)-2-phosphoglycerate + ADP + H(+). Functionally, catalyzes the transfer of the phosphate group from adenosine triphosphate (ATP) to (R)-glycerate to form (2R)-2-phosphoglycerate, an enzymatic step in (L)-glucarate/galactarate catabolic pathway. This is Glycerate 2-kinase (garK) from Escherichia coli (strain K12).